A 239-amino-acid polypeptide reads, in one-letter code: Ribonuclease PH (239 aa).

Phosphate contacts are provided by residues arginine 86 and glycine 124–arginine 126.

This sequence belongs to the RNase PH family. As to quaternary structure, homohexameric ring arranged as a trimer of dimers.

The enzyme catalyses tRNA(n+1) + phosphate = tRNA(n) + a ribonucleoside 5'-diphosphate. Its function is as follows. Phosphorolytic 3'-5' exoribonuclease that plays an important role in tRNA 3'-end maturation. Removes nucleotide residues following the 3'-CCA terminus of tRNAs; can also add nucleotides to the ends of RNA molecules by using nucleoside diphosphates as substrates, but this may not be physiologically important. Probably plays a role in initiation of 16S rRNA degradation (leading to ribosome degradation) during starvation. This is Ribonuclease PH from Rickettsia akari (strain Hartford).